The sequence spans 253 residues: Bridging integrator 3 (253 aa).

A BAR domain is found at 9–232 (GQPKKQIVPK…LDQPGHSDEQ (224 aa)). Coiled-coil stretches lie at residues 18 to 51 (KTVE…STDA), 120 to 152 (SLNM…EKTG), and 231 to 247 (EQRE…LRAL). The disordered stretch occupies residues 220-240 (SHQLDQPGHSDEQRERENEAK). Residues 227-240 (GHSDEQRERENEAK) are compositionally biased toward basic and acidic residues.

In terms of tissue distribution, ubiquitously expressed except in brain.

The protein localises to the cytoplasm. The protein resides in the cytoskeleton. Its function is as follows. Involved in cytokinesis and septation where it has a role in the localization of F-actin. In Homo sapiens (Human), this protein is Bridging integrator 3 (BIN3).